The sequence spans 488 residues: Glutamyl-tRNA(Gln) amidotransferase subunit A (488 aa).

Catalysis depends on charge relay system residues Lys77 and Ser152. The Acyl-ester intermediate role is filled by Ser176.

The protein belongs to the amidase family. GatA subfamily. In terms of assembly, heterotrimer of A, B and C subunits.

The enzyme catalyses L-glutamyl-tRNA(Gln) + L-glutamine + ATP + H2O = L-glutaminyl-tRNA(Gln) + L-glutamate + ADP + phosphate + H(+). Allows the formation of correctly charged Gln-tRNA(Gln) through the transamidation of misacylated Glu-tRNA(Gln) in organisms which lack glutaminyl-tRNA synthetase. The reaction takes place in the presence of glutamine and ATP through an activated gamma-phospho-Glu-tRNA(Gln). In Streptococcus pyogenes serotype M1, this protein is Glutamyl-tRNA(Gln) amidotransferase subunit A.